We begin with the raw amino-acid sequence, 360 residues long: Phospho-N-acetylmuramoyl-pentapeptide-transferase (360 aa).

A run of 10 helical transmembrane segments spans residues 26–46 (AIVSLLTALFISLWMGPRMIA), 72–92 (PTMGGIMILTAIVVSVLLWAY), 94–114 (SNPYVWCVLVVLVGYGIIGFV), 132–152 (WKYFWMSVIALGVAFALYLAG), 168–188 (VMPQLGLFYVLLAYFVIVGTG), 199–219 (GLAIMPTVFVAAGFALVAWAT), 236–256 (AGELVIVCTAIVGAGLGFLWF), 263–283 (VFMGDVGSLALGGALGIIAVL), 288–308 (FLLVIMGGVFVVETLSVILQV), and 338–358 (VIVRFWIISLMLVLIGLATLK).

Belongs to the glycosyltransferase 4 family. MraY subfamily. It depends on Mg(2+) as a cofactor.

It localises to the cell inner membrane. It carries out the reaction UDP-N-acetyl-alpha-D-muramoyl-L-alanyl-gamma-D-glutamyl-meso-2,6-diaminopimeloyl-D-alanyl-D-alanine + di-trans,octa-cis-undecaprenyl phosphate = di-trans,octa-cis-undecaprenyl diphospho-N-acetyl-alpha-D-muramoyl-L-alanyl-D-glutamyl-meso-2,6-diaminopimeloyl-D-alanyl-D-alanine + UMP. Its pathway is cell wall biogenesis; peptidoglycan biosynthesis. Catalyzes the initial step of the lipid cycle reactions in the biosynthesis of the cell wall peptidoglycan: transfers peptidoglycan precursor phospho-MurNAc-pentapeptide from UDP-MurNAc-pentapeptide onto the lipid carrier undecaprenyl phosphate, yielding undecaprenyl-pyrophosphoryl-MurNAc-pentapeptide, known as lipid I. The chain is Phospho-N-acetylmuramoyl-pentapeptide-transferase from Citrobacter koseri (strain ATCC BAA-895 / CDC 4225-83 / SGSC4696).